The primary structure comprises 291 residues: 4-diphosphocytidyl-2-C-methyl-D-erythritol kinase (291 aa).

Lysine 11 is an active-site residue. 95–105 (PVAAGMAGGSS) lines the ATP pocket. Aspartate 137 is a catalytic residue.

The protein belongs to the GHMP kinase family. IspE subfamily.

The enzyme catalyses 4-CDP-2-C-methyl-D-erythritol + ATP = 4-CDP-2-C-methyl-D-erythritol 2-phosphate + ADP + H(+). Its pathway is isoprenoid biosynthesis; isopentenyl diphosphate biosynthesis via DXP pathway; isopentenyl diphosphate from 1-deoxy-D-xylulose 5-phosphate: step 3/6. In terms of biological role, catalyzes the phosphorylation of the position 2 hydroxy group of 4-diphosphocytidyl-2C-methyl-D-erythritol. This Lachnoclostridium phytofermentans (strain ATCC 700394 / DSM 18823 / ISDg) (Clostridium phytofermentans) protein is 4-diphosphocytidyl-2-C-methyl-D-erythritol kinase.